The primary structure comprises 253 residues: 5'/3'-nucleotidase SurE (253 aa).

A divalent metal cation-binding residues include Asp-8, Asp-9, Ser-39, and Asn-92.

It belongs to the SurE nucleotidase family. The cofactor is a divalent metal cation.

The protein localises to the cytoplasm. It carries out the reaction a ribonucleoside 5'-phosphate + H2O = a ribonucleoside + phosphate. It catalyses the reaction a ribonucleoside 3'-phosphate + H2O = a ribonucleoside + phosphate. The catalysed reaction is [phosphate](n) + H2O = [phosphate](n-1) + phosphate + H(+). In terms of biological role, nucleotidase with a broad substrate specificity as it can dephosphorylate various ribo- and deoxyribonucleoside 5'-monophosphates and ribonucleoside 3'-monophosphates with highest affinity to 3'-AMP. Also hydrolyzes polyphosphate (exopolyphosphatase activity) with the preference for short-chain-length substrates (P20-25). Might be involved in the regulation of dNTP and NTP pools, and in the turnover of 3'-mononucleotides produced by numerous intracellular RNases (T1, T2, and F) during the degradation of various RNAs. In Enterobacter sp. (strain 638), this protein is 5'/3'-nucleotidase SurE.